The primary structure comprises 108 residues: Protein YcgL (108 aa).

Residues 12–96 (MFCVIYRSSK…PPEDLLKQHL (85 aa)) enclose the YcgL domain.

The chain is Protein YcgL from Escherichia coli O17:K52:H18 (strain UMN026 / ExPEC).